The sequence spans 189 residues: dTTP/UTP pyrophosphatase (189 aa).

The active-site Proton acceptor is Asp70.

It belongs to the Maf family. YhdE subfamily. A divalent metal cation is required as a cofactor.

It is found in the cytoplasm. It catalyses the reaction dTTP + H2O = dTMP + diphosphate + H(+). The enzyme catalyses UTP + H2O = UMP + diphosphate + H(+). Its function is as follows. Nucleoside triphosphate pyrophosphatase that hydrolyzes dTTP and UTP. May have a dual role in cell division arrest and in preventing the incorporation of modified nucleotides into cellular nucleic acids. The chain is dTTP/UTP pyrophosphatase from Akkermansia muciniphila (strain ATCC BAA-835 / DSM 22959 / JCM 33894 / BCRC 81048 / CCUG 64013 / CIP 107961 / Muc).